A 326-amino-acid polypeptide reads, in one-letter code: Deoxyuridine 5'-triphosphate nucleotidohydrolase (326 aa).

Residues 218–220 and 321–322 contribute to the substrate site; these read RSS and FG.

The protein belongs to the dUTPase family. Mg(2+) serves as cofactor.

The enzyme catalyses dUTP + H2O = dUMP + diphosphate + H(+). Functionally, involved in nucleotide metabolism: produces dUMP, the immediate precursor of thymidine nucleotides and decreases the intracellular concentration of dUTP to avoid uracil incorporation into viral DNA. This Equus caballus (Horse) protein is Deoxyuridine 5'-triphosphate nucleotidohydrolase.